Here is a 290-residue protein sequence, read N- to C-terminus: 4-hydroxy-tetrahydrodipicolinate synthase (290 aa).

Residue Thr-44 coordinates pyruvate. The Proton donor/acceptor role is filled by Tyr-132. The Schiff-base intermediate with substrate role is filled by Lys-160. A pyruvate-binding site is contributed by Ile-202.

Belongs to the DapA family. In terms of assembly, homotetramer; dimer of dimers.

It localises to the cytoplasm. It catalyses the reaction L-aspartate 4-semialdehyde + pyruvate = (2S,4S)-4-hydroxy-2,3,4,5-tetrahydrodipicolinate + H2O + H(+). Its pathway is amino-acid biosynthesis; L-lysine biosynthesis via DAP pathway; (S)-tetrahydrodipicolinate from L-aspartate: step 3/4. In terms of biological role, catalyzes the condensation of (S)-aspartate-beta-semialdehyde [(S)-ASA] and pyruvate to 4-hydroxy-tetrahydrodipicolinate (HTPA). In Geotalea daltonii (strain DSM 22248 / JCM 15807 / FRC-32) (Geobacter daltonii), this protein is 4-hydroxy-tetrahydrodipicolinate synthase.